We begin with the raw amino-acid sequence, 527 residues long: Bifunctional purine biosynthesis protein PurH (527 aa).

An MGS-like domain is found at 1–149 (MTADLLPVRR…KNFARVAVAT (149 aa)).

It belongs to the PurH family.

The catalysed reaction is (6R)-10-formyltetrahydrofolate + 5-amino-1-(5-phospho-beta-D-ribosyl)imidazole-4-carboxamide = 5-formamido-1-(5-phospho-D-ribosyl)imidazole-4-carboxamide + (6S)-5,6,7,8-tetrahydrofolate. The enzyme catalyses IMP + H2O = 5-formamido-1-(5-phospho-D-ribosyl)imidazole-4-carboxamide. It participates in purine metabolism; IMP biosynthesis via de novo pathway; 5-formamido-1-(5-phospho-D-ribosyl)imidazole-4-carboxamide from 5-amino-1-(5-phospho-D-ribosyl)imidazole-4-carboxamide (10-formyl THF route): step 1/1. It functions in the pathway purine metabolism; IMP biosynthesis via de novo pathway; IMP from 5-formamido-1-(5-phospho-D-ribosyl)imidazole-4-carboxamide: step 1/1. The protein is Bifunctional purine biosynthesis protein PurH of Stenotrophomonas maltophilia (strain R551-3).